The following is a 354-amino-acid chain: Rhodopsin (354 aa).

Residues 1–36 (MNGTEGPNFYIPMSNKTGVVRSPFEYPQYYLAEPWK) lie on the Extracellular side of the membrane. N-linked (GlcNAc...) asparagine glycans are attached at residues Asn2 and Asn15. A helical membrane pass occupies residues 37–61 (YSILAAYMFLLILLGFPINFMTLYV). Over 62–73 (TIQHKKLRTPLN) the chain is Cytoplasmic. Residues 74–96 (YILLNLAFANHFMVLCGFTITLY) traverse the membrane as a helical segment. Residues 97–110 (TSLHGYFVFGQSGC) lie on the Extracellular side of the membrane. Cys110 and Cys187 are joined by a disulfide. The helical transmembrane segment at 111 to 133 (YFEGFFATLGGEIALWSLVALAI) threads the bilayer. The short motif at 134–136 (ERY) is the 'Ionic lock' involved in activated form stabilization element. Residues 134 to 152 (ERYIVVCKPMSNFRFGENH) are Cytoplasmic-facing. The helical transmembrane segment at 153–173 (AMMGVAFTWIMALACAVPPLF) threads the bilayer. Over 174–202 (GWSRYIPEGMQCSCGVDYYTLKPEINNES) the chain is Extracellular. The chain crosses the membrane as a helical span at residues 203-224 (FVIYMFVVHFLIPLIIITFCYG). At 225–252 (RLVCTVKEAAAQQQESATTQKAEKEVTR) the chain is on the cytoplasmic side. A helical transmembrane segment spans residues 253–274 (MVIIMVIFFLICWVPYAYVAFY). Residues 275-286 (IFCNQGSEFGPI) lie on the Extracellular side of the membrane. A helical membrane pass occupies residues 287–308 (FMTVPAFFAKSSAIYNPVIYIM). Lys296 carries the post-translational modification N6-(retinylidene)lysine. At 309–354 (LNKQFRNCMITTLCCGKNPFGDDDASSAATSKTEATSVSTSQVSPA) the chain is on the cytoplasmic side. S-palmitoyl cysteine attachment occurs at residues Cys322 and Cys323. The tract at residues 332 to 354 (DASSAATSKTEATSVSTSQVSPA) is disordered. Low complexity predominate over residues 334–354 (SSAATSKTEATSVSTSQVSPA).

The protein belongs to the G-protein coupled receptor 1 family. Opsin subfamily. In terms of processing, contains one covalently linked retinal chromophore. Upon light absorption, the covalently bound 11-cis-retinal is converted to all-trans-retinal. After hydrolysis of the Schiff base and release of the covalently bound all-trans-retinal, active rhodopsin is regenerated by binding of a fresh molecule of 11-cis-retinal.

The protein localises to the membrane. It is found in the cell projection. It localises to the cilium. The protein resides in the photoreceptor outer segment. Functionally, photoreceptor required for image-forming vision at low light intensity. Required for photoreceptor cell viability after birth. Light-induced isomerization of 11-cis to all-trans retinal triggers a conformational change that activates signaling via G-proteins. Subsequent receptor phosphorylation mediates displacement of the bound G-protein alpha subunit by arrestin and terminates signaling. The sequence is that of Rhodopsin (RHO) from Rana temporaria (European common frog).